A 410-amino-acid chain; its full sequence is MKSEILCVGTEILLGDIVNTNSQFISKELANLGIEVYHQSVVGDNPQRLLDELKLGFERSDIIITTGGLGPTQDDLTKETGAKFFNRELVLDKKSLKELKEHFNRMGKSYSDGNNIKQAYFPKGSTIFPNPYGTAPGCAIEDKGKILIVLPGPPRETKPMFKNYVIPLLKKYSNGIIKSKTLRIYGLGESAMAERVSPFIENSTNPTVAPYAKEEDIILRITARAAEEKEALSLIEPVEIELRKILGVNVYGEDDVKMEEVLGRLLIDKGYTLSCAESCTGGLIASKLINYPGISKAFKEGVVAYSNEAKIKRLGVKKDTLDKYGAVSPEVAKEMAIGIAETSNTDIGISTTGIAGPDGGTPEKPIGLVYLGLYNRGEIKVKELRHAGTRDMIRKRATMNALDWIRRQIL.

Belongs to the CinA family.

This Clostridium kluyveri (strain NBRC 12016) protein is Putative competence-damage inducible protein.